The following is a 207-amino-acid chain: 2,3-bisphosphoglycerate-dependent phosphoglycerate mutase (207 aa).

Substrate is bound by residues 10–17 (RHGQSEWN), 23–24 (TG), Arg-62, 89–92 (ERDY), Lys-100, 116–117 (RR), and 160–161 (GN). Catalysis depends on His-11, which acts as the Tele-phosphohistidine intermediate. The active-site Proton donor/acceptor is Glu-89.

Belongs to the phosphoglycerate mutase family. BPG-dependent PGAM subfamily. Homodimer.

It catalyses the reaction (2R)-2-phosphoglycerate = (2R)-3-phosphoglycerate. It functions in the pathway carbohydrate degradation; glycolysis; pyruvate from D-glyceraldehyde 3-phosphate: step 3/5. Catalyzes the interconversion of 2-phosphoglycerate and 3-phosphoglycerate. This Nitrobacter winogradskyi (strain ATCC 25391 / DSM 10237 / CIP 104748 / NCIMB 11846 / Nb-255) protein is 2,3-bisphosphoglycerate-dependent phosphoglycerate mutase.